Here is a 380-residue protein sequence, read N- to C-terminus: 2-aminoethylphosphonate--pyruvate transaminase (380 aa).

At Lys204 the chain carries N6-(pyridoxal phosphate)lysine.

It belongs to the class-V pyridoxal-phosphate-dependent aminotransferase family. PhnW subfamily. In terms of assembly, homodimer. It depends on pyridoxal 5'-phosphate as a cofactor.

It carries out the reaction (2-aminoethyl)phosphonate + pyruvate = phosphonoacetaldehyde + L-alanine. Involved in phosphonate degradation. In Aeromonas hydrophila subsp. hydrophila (strain ATCC 7966 / DSM 30187 / BCRC 13018 / CCUG 14551 / JCM 1027 / KCTC 2358 / NCIMB 9240 / NCTC 8049), this protein is 2-aminoethylphosphonate--pyruvate transaminase.